A 350-amino-acid chain; its full sequence is Ferredoxin--NADP reductase (350 aa).

7 residues coordinate FAD: aspartate 49, glutamine 57, tyrosine 62, valine 102, phenylalanine 136, aspartate 303, and threonine 344.

This sequence belongs to the ferredoxin--NADP reductase type 2 family. As to quaternary structure, homodimer. It depends on FAD as a cofactor.

The enzyme catalyses 2 reduced [2Fe-2S]-[ferredoxin] + NADP(+) + H(+) = 2 oxidized [2Fe-2S]-[ferredoxin] + NADPH. The chain is Ferredoxin--NADP reductase from Granulibacter bethesdensis (strain ATCC BAA-1260 / CGDNIH1).